The sequence spans 868 residues: Probable mixed-linked glucan synthase 3 (868 aa).

The interval 36 to 68 (ERKAAGGGGGGAKGKHWAAADKGERRAAKECGG) is disordered. Residues 53–68 (AAADKGERRAAKECGG) show a composition bias toward basic and acidic residues. Helical transmembrane passes span 86 to 106 (LLHP…LFFG) and 116 to 136 (IMWF…SWLL). Residue aspartate 211 is part of the active site. Positions 412 and 414 each coordinate substrate. The active site involves aspartate 573. The next 6 membrane-spanning stretches (helical) occupy residues 649–669 (IYPV…MWLI), 686–706 (LLVI…WAGI), 717–737 (FFMI…VVNL), 771–791 (MLIP…VAIG), 810–830 (MGLL…LAIM), and 838–858 (IILV…YVAT).

Belongs to the glycosyltransferase 2 family. Plant cellulose synthase-like F subfamily.

It is found in the golgi apparatus membrane. In terms of biological role, may catalyze both beta-1,3 and beta-1,4 glycosidic linkage on beta-D-glucan. Essential for (1,3;1,4)-beta-D-glucans synthesis in grasses and cereals (Poaceae). The mixed-linked glucans (which are not present in walls of dicotyledons or most other monocotyledonous plants) are particularly important constituents of the walls of the starchy endosperm and aleurone cells of cereal grains such as oats, wheat, rice and barley. They can account for up to 70% by weight of the wall. In Oryza sativa subsp. japonica (Rice), this protein is Probable mixed-linked glucan synthase 3 (CSLF3).